Reading from the N-terminus, the 180-residue chain is Nucleoside triphosphate/diphosphate phosphatase (180 aa).

The Proton donor role is filled by Arg26. The Mg(2+) site is built by Asn90, Asp106, Asp108, Asp110, Asp123, and Glu126.

The protein belongs to the Ntdp family. The cofactor is Mg(2+).

It catalyses the reaction a ribonucleoside 5'-triphosphate + H2O = a ribonucleoside 5'-diphosphate + phosphate + H(+). The catalysed reaction is a ribonucleoside 5'-diphosphate + H2O = a ribonucleoside 5'-phosphate + phosphate + H(+). Has nucleoside phosphatase activity towards nucleoside triphosphates and nucleoside diphosphates. The chain is Nucleoside triphosphate/diphosphate phosphatase from Staphylococcus haemolyticus (strain JCSC1435).